The chain runs to 372 residues: Aminomethyltransferase (372 aa).

It belongs to the GcvT family. The glycine cleavage system is composed of four proteins: P, T, L and H.

The catalysed reaction is N(6)-[(R)-S(8)-aminomethyldihydrolipoyl]-L-lysyl-[protein] + (6S)-5,6,7,8-tetrahydrofolate = N(6)-[(R)-dihydrolipoyl]-L-lysyl-[protein] + (6R)-5,10-methylene-5,6,7,8-tetrahydrofolate + NH4(+). Its function is as follows. The glycine cleavage system catalyzes the degradation of glycine. In Streptomyces avermitilis (strain ATCC 31267 / DSM 46492 / JCM 5070 / NBRC 14893 / NCIMB 12804 / NRRL 8165 / MA-4680), this protein is Aminomethyltransferase.